Here is a 726-residue protein sequence, read N- to C-terminus: 1,4-alpha-glucan branching enzyme GlgB (726 aa).

Catalysis depends on aspartate 407, which acts as the Nucleophile. The active-site Proton donor is the glutamate 460.

It belongs to the glycosyl hydrolase 13 family. GlgB subfamily. In terms of assembly, monomer.

It carries out the reaction Transfers a segment of a (1-&gt;4)-alpha-D-glucan chain to a primary hydroxy group in a similar glucan chain.. It participates in glycan biosynthesis; glycogen biosynthesis. Its function is as follows. Catalyzes the formation of the alpha-1,6-glucosidic linkages in glycogen by scission of a 1,4-alpha-linked oligosaccharide from growing alpha-1,4-glucan chains and the subsequent attachment of the oligosaccharide to the alpha-1,6 position. The chain is 1,4-alpha-glucan branching enzyme GlgB from Hydrogenovibrio crunogenus (strain DSM 25203 / XCL-2) (Thiomicrospira crunogena).